Consider the following 444-residue polypeptide: tRNA modification GTPase MnmE (444 aa).

(6S)-5-formyl-5,6,7,8-tetrahydrofolate is bound by residues Arg23, Glu82, and Lys121. Residues 216–365 (GTSIVLAGLP…LKQALQKWLN (150 aa)) form the TrmE-type G domain. K(+) is bound at residue Asn226. GTP is bound by residues 226–231 (NAGKSS), 245–251 (TDIPGTT), and 270–273 (DSAG). Ser230 is a binding site for Mg(2+). K(+) contacts are provided by Thr245, Ile247, and Thr250. Thr251 is a binding site for Mg(2+). Lys444 is a binding site for (6S)-5-formyl-5,6,7,8-tetrahydrofolate.

Belongs to the TRAFAC class TrmE-Era-EngA-EngB-Septin-like GTPase superfamily. TrmE GTPase family. As to quaternary structure, homodimer. Heterotetramer of two MnmE and two MnmG subunits. It depends on K(+) as a cofactor.

It is found in the cytoplasm. Exhibits a very high intrinsic GTPase hydrolysis rate. Involved in the addition of a carboxymethylaminomethyl (cmnm) group at the wobble position (U34) of certain tRNAs, forming tRNA-cmnm(5)s(2)U34. The chain is tRNA modification GTPase MnmE from Chlamydia trachomatis serovar L2 (strain ATCC VR-902B / DSM 19102 / 434/Bu).